A 312-amino-acid chain; its full sequence is Homoserine O-acetyltransferase (312 aa).

Cysteine 142 functions as the Acyl-thioester intermediate in the catalytic mechanism. Substrate is bound by residues lysine 163 and serine 192. Histidine 235 functions as the Proton acceptor in the catalytic mechanism. Residue glutamate 237 is part of the active site. Arginine 249 contacts substrate.

This sequence belongs to the MetA family.

It is found in the cytoplasm. The enzyme catalyses L-homoserine + acetyl-CoA = O-acetyl-L-homoserine + CoA. The protein operates within amino-acid biosynthesis; L-methionine biosynthesis via de novo pathway; O-acetyl-L-homoserine from L-homoserine: step 1/1. In terms of biological role, transfers an acetyl group from acetyl-CoA to L-homoserine, forming acetyl-L-homoserine. The polypeptide is Homoserine O-acetyltransferase (Chelativorans sp. (strain BNC1)).